The following is a 270-amino-acid chain: MAMLDPETLRTFVSVAETGSFSRAAEKLYKTTATISYRIKLLEDNTGVALFSRTTRSVLLTPAGMHLLAQAREWLGWIDSMPGELQQINDGVERQVNIVVNNLMYDPQAIARLLAWLTQRYPFTQFHFSRQIYMGVWDTLLHDDFSLAIGVTGTEPLAENMAVYPLGEVTWLFVMSPHHPLSQQTDPLSEAQLRRYPAVNIEDSARRLTKRVAWRLPGQKEIVVPDIETKVAAHLAGVGIGFLPEPLCLPLIAQGKLIADTFRPCVPLRH.

The region spanning 4 to 61 (LDPETLRTFVSVAETGSFSRAAEKLYKTTATISYRIKLLEDNTGVALFSRTTRSVLLT) is the HTH lysR-type domain. The H-T-H motif DNA-binding region spans 21 to 40 (FSRAAEKLYKTTATISYRIK).

This sequence belongs to the LysR transcriptional regulatory family.

Positive regulator essential for the expression of allD operon. Binds to the allD promoter. The sequence is that of HTH-type transcriptional activator AllS (allS) from Klebsiella pneumoniae.